Reading from the N-terminus, the 125-residue chain is Small ribosomal subunit protein uS12m (125 aa).

It belongs to the universal ribosomal protein uS12 family. As to quaternary structure, component of the mitochondrial ribosome small subunit.

The protein resides in the mitochondrion. In terms of biological role, protein S12 is involved in the translation initiation step. The polypeptide is Small ribosomal subunit protein uS12m (RPS12) (Arabidopsis thaliana (Mouse-ear cress)).